Consider the following 183-residue polypeptide: DELTA-miturgitoxin-Cp1a (183 aa).

An N-terminal signal peptide occupies residues 1–20 (MKFSLFFSVFFLAVLHACLS). Residues 21–47 (ESEIDLEDEEHFMSSDSFLSEIQDESR) constitute a propeptide that is removed on maturation. The short motif at 44-47 (DESR) is the Processing quadruplet motif element. 8 disulfide bridges follow: C51–C66, C58–C75, C65–C88, C77–C86, C115–C130, C122–C139, C129–C157, and C141–C155. Domain repeat units follow at residues 51–77 (CIER…KCTC) and 115–141 (CVPK…QCKC). A 2 X approximate repeats with cysteine pattern C-C-CC-C-C region spans residues 51-141 (CIERNKECTN…GGIFKYQCKC (91 aa)). The predicted alpha-helix stretch occupies residues 164 to 177 (QAIEGALRIAKKLI). W181 bears the Tryptophan amide mark.

It belongs to the neurotoxin 19 (CSTX) family. Double-CSTX subfamily. Cleavage of the propeptide depends on the processing quadruplet motif (XXXR, with at least one of X being E). As to expression, expressed by the venom gland.

Its subcellular location is the secreted. The protein resides in the target cell membrane. Spider venom toxin that exhibits cytolytic activity by forming an alpha-helix across the membrane. Lethal to insect larvae. Causes instant paralysis and death in the larvae of the flesh fly (S.carnaria) at doses of 20 ug/g, at doses of less than 10 ug/g causes reversible paralysis. Has cytolytic activity against insect Sf9 cells. Causes stable and irreversible depolarization of fly muscle fibers, leading to contracture at higher toxin concentrations. Destabilizes membranes. The polypeptide is DELTA-miturgitoxin-Cp1a (Cheiracanthium punctorium (Yellow sac spider)).